The following is a 426-amino-acid chain: COP9 signalosome complex subunit 6 (426 aa).

One can recognise an MPN domain in the interval Val14–Phe155. The tract at residues Pro320–Ser426 is disordered. Acidic residues predominate over residues Ala334–Asn347.

This sequence belongs to the peptidase M67A family. CSN6 subfamily. As to quaternary structure, component of the CSN complex, probably composed of csn-1, csn-2, csn-3, csn-4, csn-5, csn-6 and csn-7. Within the complex it probably interacts directly with csn-2 and csn-4. Interacts with rbx-1.

Its subcellular location is the cytoplasm. It is found in the nucleus. Its function is as follows. Component of the COP9 signalosome complex (CSN), a complex involved in various cellular and developmental processes. The CSN complex is an essential regulator of the ubiquitin (Ubl) conjugation pathway by mediating the deneddylation of the cullin subunits of the SCF-type E3 ligase complexes, leading to decrease the Ubl ligase activity of SCF. The CSN complex plays an essential role in embryogenesis and oogenesis and is required to regulate microtubule stability in the early embryo. Mediates mei-3/katanin targeting for degradation at the meiosis to mitosis transition via deneddylation of cul-3. The sequence is that of COP9 signalosome complex subunit 6 (csn-6) from Caenorhabditis elegans.